Here is a 364-residue protein sequence, read N- to C-terminus: Cell cycle control protein 50A (364 aa).

A disordered region spans residues 1-28 (MAMNYSAKDEVDGGPAGPPGGAAKTRRP). The residue at position 2 (alanine 2) is an N-acetylalanine. Residues 2 to 49 (AMNYSAKDEVDGGPAGPPGGAAKTRRPDNTAFKQQRLPAWQPILTAGT) are Cytoplasmic-facing. A helical transmembrane segment spans residues 50–70 (VLPTFFIIGLIFIPIGIGIFV). Over 71-328 (TSNNIREIEI…SWMGGKNPFL (258 aa)) the chain is Exoplasmic loop. Intrachain disulfides connect cysteine 91–cysteine 104, cysteine 94–cysteine 102, and cysteine 157–cysteine 171. An N-linked (GlcNAc...) asparagine glycan is attached at asparagine 98. The N-linked (GlcNAc...) asparagine glycan is linked to asparagine 297. The helical transmembrane segment at 329–349 (GIAYITIGSISFLLGVVLLVI) threads the bilayer. The Cytoplasmic portion of the chain corresponds to 350 to 364 (NHKYRNSSNTADITI).

Belongs to the CDC50/LEM3 family. As to quaternary structure, component of various P4-ATPase flippase complexes which consists of a catalytic alpha subunit and an accessory beta subunit. Interacts with ATP8A1 to form a flippase complex; this complex forms an intermediate phosphoenzyme. The ATP8A2:TMEM30A flippase complex has been purified, and ATP8B1:TMEM30A and ATP8B2:TMEM30A flippase complexes have been shown to form intermediate phosphoenzymes in vitro. Interacts with alpha subunits ATP8A1, ATP8B1, ATP8B2, ATP8B4, ATP10A, ATP10B, ATP10D, ATP11A, ATP11B and ATP11C. In terms of processing, N-glycosylated. Contains high mannose-type oligosaccharides. As to expression, expressed in photoreceptor cells; detected in retina outer segment (at protein level). Detected in hepatocytes liver sinusoidal endothelial cells and kidney brush border of the proximal tubules (at protein level). Expressed in brain (at protein level).

It is found in the membrane. The protein resides in the cell membrane. It localises to the golgi apparatus. The protein localises to the cytoplasmic vesicle. Its subcellular location is the secretory vesicle membrane. It is found in the apical cell membrane. Accessory component of a P4-ATPase flippase complex which catalyzes the hydrolysis of ATP coupled to the transport of aminophospholipids from the outer to the inner leaflet of various membranes and ensures the maintenance of asymmetric distribution of phospholipids. Phospholipid translocation also seems to be implicated in vesicle formation and in uptake of lipid signaling molecules. The beta subunit may assist in binding of the phospholipid substrate. Required for the proper folding, assembly and ER to Golgi exit of the ATP8A2:TMEM30A flippase complex. ATP8A2:TMEM30A may be involved in regulation of neurite outgrowth, and, reconstituted to liposomes, predomiminantly transports phosphatidylserine (PS) and to a lesser extent phosphatidylethanolamine (PE). The ATP8A1:TMEM30A flippase complex seems to play a role in regulation of cell migration probably involving flippase-mediated translocation of phosphatidylethanolamine (PE) at the plasma membrane. Required for the formation of the ATP8A2, ATP8B1 and ATP8B2 P-type ATPAse intermediate phosphoenzymes. Involved in uptake of platelet-activating factor (PAF). Can also mediate the export of alpha subunits ATP8A1, ATP8B1, ATP8B2, ATP8B4, ATP10A, ATP10B, ATP10D, ATP11A, ATP11B and ATP11C from the ER to other membrane localizations. The polypeptide is Cell cycle control protein 50A (Mus musculus (Mouse)).